Reading from the N-terminus, the 109-residue chain is UPF0122 protein BH2485 (109 aa).

It belongs to the UPF0122 family.

Its function is as follows. Might take part in the signal recognition particle (SRP) pathway. This is inferred from the conservation of its genetic proximity to ftsY/ffh. May be a regulatory protein. The protein is UPF0122 protein BH2485 of Halalkalibacterium halodurans (strain ATCC BAA-125 / DSM 18197 / FERM 7344 / JCM 9153 / C-125) (Bacillus halodurans).